Here is a 258-residue protein sequence, read N- to C-terminus: MVATTITYEQPLNEPMRICLRLEHLFRQLHEHIREPAPAASHLAMLALLKALNVIDRPDLKTKLTQTLTQQTSTLLQLKHSPEVDNHKLQGLLDTLDRYVTHLHQTTRKIGEPLRENAFLTQIRSHLYNPAGPCNFTTPAYALWLQQPSENRINDLQNWAKEFEPLINIVNAILQIIRESTSPQNIVARQGFYQQMLNATSPCQLIQLILPIEKNIYPEICAGKHRLVIRFLPLDVNNNENTKQIAEEISFKLNCCRI.

It belongs to the ZapD family. As to quaternary structure, interacts with FtsZ.

Its subcellular location is the cytoplasm. Functionally, cell division factor that enhances FtsZ-ring assembly. Directly interacts with FtsZ and promotes bundling of FtsZ protofilaments, with a reduction in FtsZ GTPase activity. The sequence is that of Cell division protein ZapD from Coxiella burnetii (strain RSA 331 / Henzerling II).